The chain runs to 97 residues: Large ribosomal subunit protein eL21 (97 aa).

This sequence belongs to the eukaryotic ribosomal protein eL21 family.

In Methanococcus vannielii (strain ATCC 35089 / DSM 1224 / JCM 13029 / OCM 148 / SB), this protein is Large ribosomal subunit protein eL21.